The chain runs to 491 residues: Glycogen synthase (491 aa).

Lys15 provides a ligand contact to ADP-alpha-D-glucose.

This sequence belongs to the glycosyltransferase 1 family. Bacterial/plant glycogen synthase subfamily.

The enzyme catalyses [(1-&gt;4)-alpha-D-glucosyl](n) + ADP-alpha-D-glucose = [(1-&gt;4)-alpha-D-glucosyl](n+1) + ADP + H(+). It participates in glycan biosynthesis; glycogen biosynthesis. Its function is as follows. Synthesizes alpha-1,4-glucan chains using ADP-glucose. In Hydrogenovibrio crunogenus (strain DSM 25203 / XCL-2) (Thiomicrospira crunogena), this protein is Glycogen synthase.